Reading from the N-terminus, the 331-residue chain is XylDLEGF operon transcriptional activator 3 (331 aa).

The 102-residue stretch at 214–315 folds into the HTH araC/xylS-type domain; the sequence is ERVVQFIEDN…GELPSDTLRR (102 aa). DNA-binding regions (H-T-H motif) lie at residues 231–252 and 282–305; these read ERLA…EKHA and VTEM…RSTF.

The protein localises to the cytoplasm. Its function is as follows. Regulatory protein of the TOL plasmid xyl operons. XylS activates the xylXYZLTEGFJQKIH operon required for the degradation of toluene, m-xylene and p-xylene. This chain is XylDLEGF operon transcriptional activator 3 (xylS3), found in Pseudomonas putida (Arthrobacter siderocapsulatus).